The primary structure comprises 409 residues: Serine/threonine transporter SstT (409 aa).

8 consecutive transmembrane segments (helical) span residues 24 to 44, 48 to 68, 82 to 102, 142 to 162, 194 to 214, 218 to 238, 292 to 312, and 319 to 339; these read LALG…AGLF, FVGA…AATI, IIVL…IAGM, AIAN…GAAL, LGIF…ALAG, LLAV…PAIV, IPLG…VLAM, and GITV…VSAC.

This sequence belongs to the dicarboxylate/amino acid:cation symporter (DAACS) (TC 2.A.23) family.

The protein resides in the cell inner membrane. It catalyses the reaction L-serine(in) + Na(+)(in) = L-serine(out) + Na(+)(out). The catalysed reaction is L-threonine(in) + Na(+)(in) = L-threonine(out) + Na(+)(out). Functionally, involved in the import of serine and threonine into the cell, with the concomitant import of sodium (symport system). The polypeptide is Serine/threonine transporter SstT (Neisseria meningitidis serogroup B (strain ATCC BAA-335 / MC58)).